The primary structure comprises 136 residues: Large ribosomal subunit protein uL16 (136 aa).

This sequence belongs to the universal ribosomal protein uL16 family. As to quaternary structure, part of the 50S ribosomal subunit.

Its function is as follows. Binds 23S rRNA and is also seen to make contacts with the A and possibly P site tRNAs. The chain is Large ribosomal subunit protein uL16 from Elusimicrobium minutum (strain Pei191).